The following is a 99-amino-acid chain: UPF0122 protein UU142 (99 aa).

This sequence belongs to the UPF0122 family.

In terms of biological role, might take part in the signal recognition particle (SRP) pathway. This is inferred from the conservation of its genetic proximity to ftsY/ffh. May be a regulatory protein. The polypeptide is UPF0122 protein UU142 (Ureaplasma parvum serovar 3 (strain ATCC 700970)).